The following is a 243-amino-acid chain: Protein Thf1 (243 aa).

A coiled-coil region spans residues 180–224; it reads SKARVEKDLNLYKSNLEKMAQAVELTEQILESERRKREQNESAKL. Over residues 210 to 220 the composition is skewed to basic and acidic residues; that stretch reads ESERRKREQNE. The disordered stretch occupies residues 210 to 243; the sequence is ESERRKREQNESAKLNTGSSEQMSQGVEACSNIS. The segment covering 221-243 has biased composition (polar residues); that stretch reads SAKLNTGSSEQMSQGVEACSNIS.

Belongs to the THF1 family.

Functionally, may be involved in photosynthetic membrane biogenesis. The protein is Protein Thf1 of Prochlorococcus marinus (strain MIT 9313).